We begin with the raw amino-acid sequence, 100 residues long: Small ribosomal subunit protein uS14c (100 aa).

This sequence belongs to the universal ribosomal protein uS14 family. In terms of assembly, part of the 30S ribosomal subunit.

Its subcellular location is the plastid. The protein resides in the chloroplast. Its function is as follows. Binds 16S rRNA, required for the assembly of 30S particles. The chain is Small ribosomal subunit protein uS14c from Stigeoclonium helveticum (Green alga).